We begin with the raw amino-acid sequence, 101 residues long: Small ribosomal subunit protein uS14 (101 aa).

Belongs to the universal ribosomal protein uS14 family. Part of the 30S ribosomal subunit. Contacts proteins S3 and S10.

Its function is as follows. Binds 16S rRNA, required for the assembly of 30S particles and may also be responsible for determining the conformation of the 16S rRNA at the A site. This Marinobacter nauticus (strain ATCC 700491 / DSM 11845 / VT8) (Marinobacter aquaeolei) protein is Small ribosomal subunit protein uS14.